We begin with the raw amino-acid sequence, 197 residues long: uncharacterized protein (197 aa).

Residues L103–L123 form a helical membrane-spanning segment.

The protein resides in the host membrane. This is an uncharacterized protein from Equus caballus (Horse).